We begin with the raw amino-acid sequence, 247 residues long: UPF0246 protein LAF_1150 (247 aa).

The protein belongs to the UPF0246 family.

The protein is UPF0246 protein LAF_1150 of Limosilactobacillus fermentum (strain NBRC 3956 / LMG 18251) (Lactobacillus fermentum).